Consider the following 349-residue polypeptide: GTP 3',8-cyclase (349 aa).

Residues Pro24–Pro249 enclose the Radical SAM core domain. Arg33 contacts GTP. The [4Fe-4S] cluster site is built by Cys40 and Cys44. Tyr46 lines the S-adenosyl-L-methionine pocket. Cys47 contacts [4Fe-4S] cluster. GTP is bound at residue Arg82. Gly86 is an S-adenosyl-L-methionine binding site. Residue Thr116 participates in GTP binding. S-adenosyl-L-methionine is bound at residue Ser140. Lys176 is a binding site for GTP. S-adenosyl-L-methionine is bound at residue Met210. Positions 273 and 276 each coordinate [4Fe-4S] cluster. Residue Arg278–Arg280 participates in GTP binding. Cys290 provides a ligand contact to [4Fe-4S] cluster.

Belongs to the radical SAM superfamily. MoaA family. Monomer and homodimer. [4Fe-4S] cluster is required as a cofactor.

The enzyme catalyses GTP + AH2 + S-adenosyl-L-methionine = (8S)-3',8-cyclo-7,8-dihydroguanosine 5'-triphosphate + 5'-deoxyadenosine + L-methionine + A + H(+). The protein operates within cofactor biosynthesis; molybdopterin biosynthesis. In terms of biological role, catalyzes the cyclization of GTP to (8S)-3',8-cyclo-7,8-dihydroguanosine 5'-triphosphate. The protein is GTP 3',8-cyclase of Agrobacterium fabrum (strain C58 / ATCC 33970) (Agrobacterium tumefaciens (strain C58)).